The sequence spans 371 residues: Trans-enoyl reductase mycC (371 aa).

51–54 (CDWK) lines the NADP(+) pocket. Substrate is bound at residue 140–147 (CVVGTVGL). Residues 182–185 (STAS), 205–208 (SPAN), Tyr223, and 270–271 (FE) contribute to the NADP(+) site. 291-295 (GIRLL) lines the substrate pocket. An NADP(+)-binding site is contributed by 361–362 (VS).

This sequence belongs to the zinc-containing alcohol dehydrogenase family. Monomer.

The enzyme catalyses L-leucine + 8 malonyl-CoA + 4 S-adenosyl-L-methionine + ATP + 9 NADPH + 12 H(+) = (5S)-5-(2-methylpropyl)-3-[(2E,6R,8E,10E,12E)-6,8,10,12-tetramethyltetradeca-2,8,10,12-tetraenoyl]-2,5-dihydro-1H-pyrrol-2-one + AMP + 4 S-adenosyl-L-homocysteine + 8 CO2 + diphosphate + 9 NADP(+) + 8 CoA + 7 H2O. It participates in mycotoxin biosynthesis. Functionally, trans-enoyl reductase; part of the gene cluster that mediates the biosynthesis of myceliothermophins, mycotoxins that contain a trans-fused decalin ring system connected to a conjugated 3-pyrrolin-2-one moiety and that have potential anti-tumor properties. The polyketide synthase module (PKS) of the PKS-NRPS mycA is responsible for the synthesis of the octaketide backbone. The downstream nonribosomal peptide synthetase (NRPS) module then amidates the carboxyl end of the octaketide with a leucine. A reductase-like domain (R) at the C-terminus catalyzes the reductive release of the polyketide-amino acid intermediate. Because mycA lacks a designated enoylreductase (ER) domain, the required activity is provided the enoyl reductase mycC. Following mycA-catalyzed construction and release of aminoacyl polyketide aldehyde, Knoevenagel condensation yields the expected ketone. This C18 keto acyclic precursor is the substrate of the Diels-Alderase mycB, that catalyzes the Diels-Alder cycloaddition to produce myceliothermophin E. A yet unknown oxygenase involved in the production of myceliothermophin A, via substitution with a hydroxyl group at the C21, has still to be identified. The polypeptide is Trans-enoyl reductase mycC (Thermothelomyces thermophilus (strain ATCC 42464 / BCRC 31852 / DSM 1799) (Sporotrichum thermophile)).